A 738-amino-acid polypeptide reads, in one-letter code: AP-4 complex subunit beta-1 (738 aa).

Residues 534–600 are hinge; that stretch reads CSPKSDPSLG…NASFATSGHL (67 aa). Residues 601-738 are ear; mediates interaction with TEPSIN; that stretch reads ISEENKEGAQ…VIGTVGDIKS (138 aa).

This sequence belongs to the adaptor complexes large subunit family. In terms of assembly, adaptor protein complex 4 (AP-4) is a heterotetramer composed of two large adaptins (epsilon-type subunit AP4E1 and beta-type subunit AP4B1), a medium adaptin (mu-type subunit AP4M1) and a small adaptin (sigma-type AP4S1). Interacts with TEPSIN; this interaction requires the presence of a functional AP-4 complex. Interacts with GRIA2; probably indirect it mediates the somatodendritic localization of GRIA2 in neurons.

The protein localises to the golgi apparatus. Its subcellular location is the trans-Golgi network membrane. Its function is as follows. Component of the adaptor protein complex 4 (AP-4). Adaptor protein complexes are vesicle coat components involved both in vesicle formation and cargo selection. They control the vesicular transport of proteins in different trafficking pathways. AP-4 forms a non clathrin-associated coat on vesicles departing the trans-Golgi network (TGN) and may be involved in the targeting of proteins from the trans-Golgi network (TGN) to the endosomal-lysosomal system. It is also involved in protein sorting to the basolateral membrane in epithelial cells and the proper asymmetric localization of somatodendritic proteins in neurons. AP-4 is involved in the recognition and binding of tyrosine-based sorting signals found in the cytoplasmic part of cargos, but may also recognize other types of sorting signal. The polypeptide is AP-4 complex subunit beta-1 (Mus musculus (Mouse)).